The primary structure comprises 1033 residues: Probable beta-glucosidase E (1033 aa).

Positions 1 to 71 (MAPPDSTHGG…RSGSYKLRPV (71 aa)) are disordered. The Cytoplasmic portion of the chain corresponds to 1–161 (MAPPDSTHGG…PVKYARIWWR (161 aa)). Composition is skewed to basic and acidic residues over residues 11-20 (SFRDHLKTND) and 59-71 (DLER…LRPV). Residues 162 to 182 (TLLAVVVTLVVVVWGFLSFAV) traverse the membrane as a helical; Signal-anchor for type II membrane protein segment. The Extracellular segment spans residues 183 to 1033 (SHREEPTVWP…SRDLPLMGEY (851 aa)). N-linked (GlcNAc...) asparagine glycans are attached at residues N224, N232, and N418. The active site involves D446. Residues N489, N528, N593, N909, N918, and N976 are each glycosylated (N-linked (GlcNAc...) asparagine).

It belongs to the glycosyl hydrolase 3 family.

It is found in the cell membrane. The enzyme catalyses Hydrolysis of terminal, non-reducing beta-D-glucosyl residues with release of beta-D-glucose.. The protein operates within glycan metabolism; cellulose degradation. In terms of biological role, beta-glucosidases are one of a number of cellulolytic enzymes involved in the degradation of cellulosic biomass. Catalyzes the last step releasing glucose from the inhibitory cellobiose. The protein is Probable beta-glucosidase E (bglE) of Aspergillus fumigatus (strain CBS 144.89 / FGSC A1163 / CEA10) (Neosartorya fumigata).